A 252-amino-acid polypeptide reads, in one-letter code: MTQSASTAPSWSIDPADVARFSAIAAEWWDPRGKFAPLHVFNPCRLSFIREQALARFERDGNGRTPFEGLRLLDIGCGGGLLSEPMARLGFTVTAVDASEKNIKTAATHAAEQGLEIGYRPATAEQLLAEGAGPFDVVLTMEVVEHVADPGEFLRTCAKLLAPGGLMIVATLNRTLKALALAKIGAEYVLRWVPPGTHDWKQFLKPDELRAFLAGEPVDVHGPFGVAYNPLTGRWSRSADCDINYMMTVTKD.

Residues Arg-45, Gly-76, Asp-97, and Met-141 each coordinate S-adenosyl-L-methionine.

It belongs to the methyltransferase superfamily. UbiG/COQ3 family.

The enzyme catalyses a 3-demethylubiquinol + S-adenosyl-L-methionine = a ubiquinol + S-adenosyl-L-homocysteine + H(+). The catalysed reaction is a 3-(all-trans-polyprenyl)benzene-1,2-diol + S-adenosyl-L-methionine = a 2-methoxy-6-(all-trans-polyprenyl)phenol + S-adenosyl-L-homocysteine + H(+). It participates in cofactor biosynthesis; ubiquinone biosynthesis. O-methyltransferase that catalyzes the 2 O-methylation steps in the ubiquinone biosynthetic pathway. This is Ubiquinone biosynthesis O-methyltransferase from Caulobacter sp. (strain K31).